Consider the following 233-residue polypeptide: Pirin-like protein YhaK (233 aa).

The protein belongs to the pirin family. Monomer.

The protein localises to the cytoplasm. Its function is as follows. Does not have quercetin 2,3-dioxygenase activity. This Escherichia coli O157:H7 protein is Pirin-like protein YhaK (yhaK).